The primary structure comprises 456 residues: ATP-dependent protease ATPase subunit HslU (456 aa).

Residues isoleucine 18, 60-65, aspartate 270, glutamate 334, and arginine 406 contribute to the ATP site; that span reads GVGKTE.

Belongs to the ClpX chaperone family. HslU subfamily. As to quaternary structure, a double ring-shaped homohexamer of HslV is capped on each side by a ring-shaped HslU homohexamer. The assembly of the HslU/HslV complex is dependent on binding of ATP.

Its subcellular location is the cytoplasm. In terms of biological role, ATPase subunit of a proteasome-like degradation complex; this subunit has chaperone activity. The binding of ATP and its subsequent hydrolysis by HslU are essential for unfolding of protein substrates subsequently hydrolyzed by HslV. HslU recognizes the N-terminal part of its protein substrates and unfolds these before they are guided to HslV for hydrolysis. This chain is ATP-dependent protease ATPase subunit HslU, found in Exiguobacterium sibiricum (strain DSM 17290 / CCUG 55495 / CIP 109462 / JCM 13490 / 255-15).